The following is a 179-amino-acid chain: MARLKEIYRKEIAPKLKEELKLSNVMEVPRVTKITLNMGLGEAIGDKKVIEHAVADLEKITGQKVVVTYARKSIAGFKVREGWPIGVKVTLRRERMYEFLDRLLSISLPRVRDFRGLNAKSFDGRGNYSMGVKEQIIFPEIDYDKIDALRGLDITLTTTAKNDDEGRALLRAFKFPFRN.

It belongs to the universal ribosomal protein uL5 family. Part of the 50S ribosomal subunit; part of the 5S rRNA/L5/L18/L25 subcomplex. Contacts the 5S rRNA and the P site tRNA. Forms a bridge to the 30S subunit in the 70S ribosome.

In terms of biological role, this is one of the proteins that bind and probably mediate the attachment of the 5S RNA into the large ribosomal subunit, where it forms part of the central protuberance. In the 70S ribosome it contacts protein S13 of the 30S subunit (bridge B1b), connecting the 2 subunits; this bridge is implicated in subunit movement. Contacts the P site tRNA; the 5S rRNA and some of its associated proteins might help stabilize positioning of ribosome-bound tRNAs. The polypeptide is Large ribosomal subunit protein uL5 (Pseudomonas fluorescens (strain ATCC BAA-477 / NRRL B-23932 / Pf-5)).